The following is a 515-amino-acid chain: Putative BTB/POZ domain-containing protein At3g49970 (515 aa).

One can recognise a BTB domain in the interval 1-63; that stretch reads MLEKLSFLLH…CYDISFEINT (63 aa). In terms of domain architecture, NPH3 spans 149–409; it reads DWWADDLAVL…NSDSPAPATA (261 aa). Tyrosine 350 is subject to Phosphotyrosine. The interval 395-417 is disordered; that stretch reads QENLSNSDSPAPATAEKTLSPPE. Residues 418 to 452 adopt a coiled-coil conformation; sequence LSSYKNELSKLNRENQYLKLELLKVKMKFKELEKE. The segment at 494-515 is disordered; that stretch reads INPFGLKQGQTKQPKSRRHSIS.

This sequence belongs to the NPH3 family.

The protein operates within protein modification; protein ubiquitination. Functionally, may act as a substrate-specific adapter of an E3 ubiquitin-protein ligase complex (CUL3-RBX1-BTB) which mediates the ubiquitination and subsequent proteasomal degradation of target proteins. This chain is Putative BTB/POZ domain-containing protein At3g49970, found in Arabidopsis thaliana (Mouse-ear cress).